The chain runs to 38 residues: Exendin-1 (38 aa).

Ser32 carries an O-linked (HexNAc...) serine; in Exendin-1 and Exendin-1b glycan.

The protein belongs to the glucagon family. In terms of processing, O-linked glycan consists of Hex-HexNAc saccharide. Glycosylation may be of interest for the biological stability of exendin-1 and exendin-1b. As to expression, expressed by the venom gland.

The protein localises to the secreted. O-linked and free exendin-1 and exendin-1b have vasoactive intestinal peptide(VIP)/secretin-like biological activities. They interact with rat and human VIP receptors 1 (VIPR1) and 2 (VIPR2), with the highest affinity for the human VIPR2. They induce hypotension that is mediated by relaxation of cardiac smooth muscle. The chain is Exendin-1 from Heloderma horridum horridum (Mexican beaded lizard).